The chain runs to 248 residues: Large ribosomal subunit protein uL4 (248 aa).

2 disordered regions span residues arginine 72–asparagine 103 and glycine 173–serine 210. The span at proline 92–asparagine 103 shows a compositional bias: basic and acidic residues. Positions arginine 177 to serine 189 are enriched in basic residues.

Belongs to the universal ribosomal protein uL4 family. Part of the 50S ribosomal subunit.

Its function is as follows. One of the primary rRNA binding proteins, this protein initially binds near the 5'-end of the 23S rRNA. It is important during the early stages of 50S assembly. It makes multiple contacts with different domains of the 23S rRNA in the assembled 50S subunit and ribosome. Functionally, forms part of the polypeptide exit tunnel. The protein is Large ribosomal subunit protein uL4 of Halorubrum lacusprofundi (strain ATCC 49239 / DSM 5036 / JCM 8891 / ACAM 34).